Consider the following 396-residue polypeptide: Seminal vesicle major clotting proteins (396 aa).

The N-terminal stretch at 1–21 (MKSTIFFILSLLLMLENQAAG) is a signal peptide. Residues 45–178 (MEEAVSGSGL…ASSVDHRKKG (134 aa)) are disordered. Residues 60 to 152 (RGSDREESVG…RVSVRHERVE (93 aa)) show a composition bias toward basic and acidic residues. SVP-3/-4 repeat repeat units lie at residues 65–88 (EESV…RSSV), 89–112 (EEPE…RHNV), and 113–136 (EEPE…RHSA). Residues 137–157 (EEPEGERVSVRHERVEKTHKR) form an SVP-3/-4 repeat; truncated repeat. The propeptide occupies 177-192 (KGHIRFKRQDPIAALA). SVP-1 clotting repeat units follow at residues 194-217 (IEGQ…ERFS), 218-241 (VKGQ…ERFS), 242-265 (VTGQ…ERFS), 266-289 (MTGQ…ERFS), 290-313 (MTGQ…ERFS), 314-337 (VTGQ…ERFS), 338-361 (VTGQ…ERFS), and 362-385 (VSGQ…SGFS). The interval 194 to 396 (IEGQDAVKDS…KGQGSLKGLI (203 aa)) is 9 X tandem repeats of SVP-1 like motif. The tract at residues 377–396 (QESVQSGFSVKGQGSLKGLI) is disordered. One copy of the SVP-1 clotting 9; truncated repeat lies at 386–396 (VKGQGSLKGLI).

To the SVP-2 precursor, particularly in regions where protein processing must occur. Post-translationally, SVP-3 may be a post-translationally modified form of SVP-4. In terms of processing, covalent clotting of SVP-1 is catalyzed by a transglutaminase secreted by the anterior prostate through the formation of gamma-glutamyl-epsilon-lysine cross-links. The conserved 2 Lys and 1 Gln residues per functional unit seem to be the residues involved in the formation of those cross-links.

The protein localises to the secreted. Its function is as follows. SVP-1 serves as substrate in the formation of the copulatory plug. SVP-3 and SVP-4 may also contribute to the clot. In Cavia porcellus (Guinea pig), this protein is Seminal vesicle major clotting proteins.